Reading from the N-terminus, the 636-residue chain is MGQGPRSPHKVGRRFPAGGKRGRGAKGSGRPLPGRKRQPWPPPDGRSEPAPDSHPHLSPEALGYFRRALSALKEAPETGEERDLMVHNIMKEVETQALALSTNRTGSEMLQELLGFSPLKPLCRVWAALRSNLRTVACHRCGVHVLQSALLQLPRLLGSAAEEEEEEEEDGKDGPTETLEELVLGLAAEVCDDFLVYCGDTHGSFVVRTLLQVLGGTILESERARPRGSQSSEAQKTPAQECKPADFEVPETFLNRLQDLSSSFLKDIAVFITDKISSFCLQVALQVLHRKLPQFCAHLCNAVIGYLSTRGSSVDGSPLLLFLRDQTSSRLLEQVLLVLEPPRLQSLFEEHLQGQLQTLAAHPIANFPLQRLLDAVTTPELLSPVFEELSPVLEAVLAQGHPGVVIALVGACRRVGAYQAKVLQLLLEAFHCAEPSSRQVACVPLFATLMAYEVYYGLTEEEGAVPAEHQVAMAAARALGDVTVLGSLLLQHLLHFSTPGLVLRSLGALTGPQLLSLAQSPAGSHVLDAILTSPSVTRKLRRRVLQNLKGQYVALACSRHGSRVLDAIWSGAALRARKEIAAELGEQNQELIRDPFGHHVARNVALTTFLKRREAWEQQQGAVAKRRRALNSILED.

Residues Met1–Pro59 form a disordered region. Ser7 carries the phosphoserine modification. Residues Gly45–Leu57 show a composition bias toward basic and acidic residues. Pumilio repeat units lie at residues Glu92–Cys123 and Glu189–Arg223. The interval Glu222–Glu241 is disordered. A compositionally biased stretch (polar residues) spans Gly228–Pro238. 4 Pumilio repeats span residues Ser313–Phe348, His351–Phe386, Leu509–Val544, and Asn547–Ala581.

The protein belongs to the NOP9 family.

This chain is Nucleolar protein 9 (NOP9), found in Homo sapiens (Human).